The primary structure comprises 380 residues: MAPNIRKSHPLLKMINNSLIDLPAPSNISAWWNFGSLLAVCLATQILTGLLLAMHYTADTSLAFSSVAHTCRNVQYGWLIRNLHANGASFFFICIFLHIGRGLYYGSYLYKETWNTGVILLLTLMATAFVGYVLPWGQMSFWGGTVITNLFSAIPYIGQTLVEWAWGGFSVDNPTLTRFFALHFLLPFVIAGITVTHLMFLHESGSNNPLGISSNSDKIPFHPYYSLKDILGLALMLTPFLTLALFSPNLLGDPENFTPANPLVTPPHIKPEWYFLFAYAILRSIPNKLGGVLALAASVLILLLIPFLHKSKQRTMTFRPLSQALFWLLVANLLILTWVGSQPVEHPFIIIGQMASFSYFTILLSLLPAVGTLENKMLNY.

A run of 4 helical transmembrane segments spans residues 34–54 (FGSL…LLAM), 78–99 (WLIR…FLHI), 114–134 (WNTG…GYVL), and 179–199 (FFAL…THLM). Heme b is bound by residues histidine 84 and histidine 98. Residues histidine 183 and histidine 197 each coordinate heme b. A ubiquinone is bound at residue histidine 202. 4 consecutive transmembrane segments (helical) span residues 227-247 (LKDI…ALFS), 289-309 (LGGV…PFLH), 321-341 (LSQA…WVGS), and 348-368 (FIII…SLLP).

This sequence belongs to the cytochrome b family. In terms of assembly, the cytochrome bc1 complex contains 11 subunits: 3 respiratory subunits (MT-CYB, CYC1 and UQCRFS1), 2 core proteins (UQCRC1 and UQCRC2) and 6 low-molecular weight proteins (UQCRH/QCR6, UQCRB/QCR7, UQCRQ/QCR8, UQCR10/QCR9, UQCR11/QCR10 and a cleavage product of UQCRFS1). This cytochrome bc1 complex then forms a dimer. Heme b is required as a cofactor.

It localises to the mitochondrion inner membrane. In terms of biological role, component of the ubiquinol-cytochrome c reductase complex (complex III or cytochrome b-c1 complex) that is part of the mitochondrial respiratory chain. The b-c1 complex mediates electron transfer from ubiquinol to cytochrome c. Contributes to the generation of a proton gradient across the mitochondrial membrane that is then used for ATP synthesis. This chain is Cytochrome b (MT-CYB), found in Crossoptilon crossoptilon (White-eared pheasant).